The primary structure comprises 400 residues: Argininosuccinate synthase (400 aa).

ATP contacts are provided by residues 10-18 and alanine 38; that span reads AYSGGVDTS. An L-citrulline-binding site is contributed by tyrosine 89. Glycine 119 contacts ATP. Residues threonine 121, asparagine 125, and aspartate 126 each contribute to the L-aspartate site. Asparagine 125 is an L-citrulline binding site. L-citrulline is bound by residues arginine 129, serine 177, serine 186, glutamate 262, and tyrosine 274.

It belongs to the argininosuccinate synthase family. Type 1 subfamily. Homotetramer.

Its subcellular location is the cytoplasm. It catalyses the reaction L-citrulline + L-aspartate + ATP = 2-(N(omega)-L-arginino)succinate + AMP + diphosphate + H(+). It participates in amino-acid biosynthesis; L-arginine biosynthesis; L-arginine from L-ornithine and carbamoyl phosphate: step 2/3. Activity decreases to 53.9% and 18.4% in the presence of 1 mM and 5 mM arginine, respectively. Activity also decreases to 80.1%, 78.1% and 92.1% in the presence of 5 mM ornithine, lysine and succinate, respectively. Activity does not decrease in the presence of glutamate, glutamine or asparagine. In terms of biological role, catalyzes the condensation of citrulline and aspartate into argininosuccinate, the immediate precursor of arginine. SyArgG is the rate-limiting step in arginine biosynthesis in Synechocystis PCC 6803. The chain is Argininosuccinate synthase from Synechocystis sp. (strain ATCC 27184 / PCC 6803 / Kazusa).